The chain runs to 386 residues: Patatin-16 (386 aa).

The signal sequence occupies residues 1-23 (MATTKSFLILIVMILATTSSTFA). Residues 32–229 (LSIDGGGIKG…TVADPALLSV (198 aa)) enclose the PNPLA domain. Residues 36–41 (GGGIKG) carry the GXGXXG motif. The GXSXG motif lies at 75–79 (GTSTG). Serine 77 functions as the Nucleophile in the catalytic mechanism. N-linked (GlcNAc...) asparagine glycosylation occurs at asparagine 115. Aspartate 215 serves as the catalytic Proton acceptor. The DGA/G motif lies at 215-217 (DGA). The stretch at 360–384 (ETYEEALKRFAKLLSDRKKLRANKA) forms a coiled coil.

The protein belongs to the patatin family.

It is found in the vacuole. Functionally, probable lipolytic acyl hydrolase (LAH), an activity which is thought to be involved in the response of tubers to pathogens. The polypeptide is Patatin-16 (Solanum tuberosum (Potato)).